The following is a 285-amino-acid chain: Urease accessory protein UreD (285 aa).

Belongs to the UreD family. As to quaternary structure, ureD, UreF and UreG form a complex that acts as a GTP-hydrolysis-dependent molecular chaperone, activating the urease apoprotein by helping to assemble the nickel containing metallocenter of UreC. The UreE protein probably delivers the nickel.

The protein resides in the cytoplasm. In terms of biological role, required for maturation of urease via the functional incorporation of the urease nickel metallocenter. The chain is Urease accessory protein UreD from Citrobacter koseri (strain ATCC BAA-895 / CDC 4225-83 / SGSC4696).